We begin with the raw amino-acid sequence, 548 residues long: Glutamate--tRNA ligase (548 aa).

The short motif at 102–112 is the 'HIGH' region element; the sequence is PSPSGPLHIGH.

This sequence belongs to the class-I aminoacyl-tRNA synthetase family. Glutamate--tRNA ligase type 2 subfamily.

The protein resides in the cytoplasm. The catalysed reaction is tRNA(Glu) + L-glutamate + ATP = L-glutamyl-tRNA(Glu) + AMP + diphosphate. Its function is as follows. Catalyzes the attachment of glutamate to tRNA(Glu) in a two-step reaction: glutamate is first activated by ATP to form Glu-AMP and then transferred to the acceptor end of tRNA(Glu). The sequence is that of Glutamate--tRNA ligase from Thermoplasma volcanium (strain ATCC 51530 / DSM 4299 / JCM 9571 / NBRC 15438 / GSS1).